Reading from the N-terminus, the 132-residue chain is ATP synthase epsilon chain (132 aa).

The protein belongs to the ATPase epsilon chain family. F-type ATPases have 2 components, CF(1) - the catalytic core - and CF(0) - the membrane proton channel. CF(1) has five subunits: alpha(3), beta(3), gamma(1), delta(1), epsilon(1). CF(0) has three main subunits: a, b and c.

The protein localises to the cell inner membrane. Its function is as follows. Produces ATP from ADP in the presence of a proton gradient across the membrane. The sequence is that of ATP synthase epsilon chain from Anaeromyxobacter dehalogenans (strain 2CP-C).